Here is a 689-residue protein sequence, read N- to C-terminus: DNA topoisomerase 1 (689 aa).

The 111-residue stretch at 3-113 (DNLVIVESPA…KENRVVFNEI (111 aa)) folds into the Toprim domain. 2 residues coordinate Mg(2+): E9 and D82. One can recognise a Topo IA-type catalytic domain in the interval 129–557 (EMNLVDAQQA…FFSSFKQDVE (429 aa)). The interaction with DNA stretch occupies residues 163 to 168 (SAGRVQ). The O-(5'-phospho-DNA)-tyrosine intermediate role is filled by Y298. A disordered region spans residues 328–357 (SKRKASGKQGDQDAHEAIRPSSTMRTPDDM). 3 consecutive C4-type zinc fingers follow at residues 577–603 (CEVC…FPDC), 617–645 (CPKC…YPEC), and 658–681 (CPKC…CSNC).

The protein belongs to the type IA topoisomerase family. As to quaternary structure, monomer. Mg(2+) is required as a cofactor.

The enzyme catalyses ATP-independent breakage of single-stranded DNA, followed by passage and rejoining.. In terms of biological role, releases the supercoiling and torsional tension of DNA, which is introduced during the DNA replication and transcription, by transiently cleaving and rejoining one strand of the DNA duplex. Introduces a single-strand break via transesterification at a target site in duplex DNA. The scissile phosphodiester is attacked by the catalytic tyrosine of the enzyme, resulting in the formation of a DNA-(5'-phosphotyrosyl)-enzyme intermediate and the expulsion of a 3'-OH DNA strand. The free DNA strand then undergoes passage around the unbroken strand, thus removing DNA supercoils. Finally, in the religation step, the DNA 3'-OH attacks the covalent intermediate to expel the active-site tyrosine and restore the DNA phosphodiester backbone. In Staphylococcus aureus (strain bovine RF122 / ET3-1), this protein is DNA topoisomerase 1.